A 108-amino-acid polypeptide reads, in one-letter code: UPF0102 protein Sputcn32_3693 (108 aa).

It belongs to the UPF0102 family.

The polypeptide is UPF0102 protein Sputcn32_3693 (Shewanella putrefaciens (strain CN-32 / ATCC BAA-453)).